The primary structure comprises 498 residues: Hyaluronan-mediated motility receptor (498 aa).

Residues 150–331 are required for interaction with FAM83D; it reads EEMTSERNVF…ITDLQNQLRQ (182 aa). N-linked (GlcNAc...) asparagine glycosylation is found at asparagine 262 and asparagine 302. Hyaluronic acid-binding regions lie at residues 420-430 and 442-451; these read KQKIKHVVKLK and KLRSQLAKRK. Residue asparagine 483 is glycosylated (N-linked (GlcNAc...) asparagine). Threonine 488 carries the post-translational modification Phosphothreonine.

Interacts with ANKRD26. Interacts with DYNLL1. Interacts with FAM83D/CHICA.

The protein resides in the cell surface. The protein localises to the cytoplasm. It is found in the cytoskeleton. Its subcellular location is the spindle. Its function is as follows. Receptor for hyaluronic acid (HA). Involved in cell motility. When hyaluronan binds to HMMR, the phosphorylation of a number of proteins, including the PTK2/FAK1 occurs. May also be involved in cellular transformation and metastasis formation, and in regulating extracellular-regulated kinase (ERK) activity. May act as a regulator of adipogenisis. This is Hyaluronan-mediated motility receptor (Hmmr) from Rattus norvegicus (Rat).